The chain runs to 1403 residues: Mannuronan C5-epimerase AlgE1 (1403 aa).

7 PbH1 repeats span residues 133–155 (DRDVTLERVEIREMSGYGFDPHE), 157–179 (TINLTIRDSVAHDNSLDGFVADY), 180–202 (QVGGVFENNVSYNNDRHGFNIVT), 204–226 (TNDFVLSNNVAYGNGGAGLVVQR), 257–279 (AHDVTLQNAEIYGNGLYGVRVYG), 280–302 (AQDVQILDNQIHDNSQNGAYAEV), and 320–359 (TTGTWLEGNVISGSANSTYGIQERADGTDYSSLYANSIDG). 2 disordered regions span residues 372–395 (STVSSQSGSGQQATLEGSAGNDAL) and 408–428 (AGDDRLNGDAGNDILDGGAGR). Hemolysin-type calcium-binding repeat units follow at residues 388-403 (GSAGNDALSGTEAHET), 406-422 (GQAGDDRLNGDAGNDIL), 424-440 (GGAGRDNLTGGAGADTF), 557-573 (GYGGNDTLNGGAGDDIL), 574-591 (VGGAGRDSLTGGAGADVF), 697-712 (EGTDGNDTLQGTEANE), 716-732 (GLDGRDNLNGGAGDDIL), and 734-750 (GGAGRDTLTGGTGADTF). PbH1 repeat units lie at residues 977-999 (DRNVTIERVEIREMSGYGFDPHE), 1001-1023 (TINLTIRDSVAHDNGLDGFVADY), 1024-1046 (LVDSVFENNVAYNNDRHGFNIVT), 1048-1070 (TYDFVMTNNVAYGNGGAGLTIQR), 1101-1123 (TNNVTLQNAEIYGNGSSGVRLYG), 1124-1146 (TEDVQILDNQIHDNSQNGTYPEV), 1163-1185 (TLNTRIEGNLIDASDNANYAVRE), and 1190-1212 (SDYTTLVDNDISGGQVASVQLSG). Hemolysin-type calcium-binding repeat units follow at residues 1227–1243 (GTDGNDVLVGSDANDQL), 1244–1261 (YGGAGDDRLDGGAGDDLL), and 1263–1279 (GGAGRDDLTGGTGADTF).

This sequence belongs to the D-mannuronate C5-epimerase family. Ca(2+) serves as cofactor.

It is found in the secreted. The enzyme catalyses [(1-&gt;4)-beta-D-mannuronosyl](n) = [alginate](n). It functions in the pathway glycan biosynthesis; alginate biosynthesis. Its activity is regulated as follows. Inhibited by zinc. Functionally, converts beta-D-mannuronic acid (M) to alpha-L-guluronic acid (G), producing a polymer with gel-forming capacity, required for the formation of the cyst coat. The protein is Mannuronan C5-epimerase AlgE1 of Azotobacter vinelandii.